We begin with the raw amino-acid sequence, 412 residues long: uncharacterized protein (412 aa).

Belongs to the PQQ oxidoreductase GdhB family. It depends on pyrroloquinoline quinone as a cofactor.

This is an uncharacterized protein from Synechocystis sp. (strain ATCC 27184 / PCC 6803 / Kazusa).